Consider the following 327-residue polypeptide: MARFAWTRVAPVALVTFWLVLSLSPTDAQVNLSSVDFLDLPALLGVPVDPKRARGYLLVARPADACHAIEGPWPDNHSLDPLVLVRPLGCSWEQTGRRAQRAGATAASVGPEAPGQLREFEDLEVTVRCDQPARVLLPHAEPCPDPECHPVVVASWALARALALAASTLFVLRQLWPWVRGLGSRGTAVKTQTCQKAQVRTFTRLSDLCAICLDDYEEGERLKILPCAHAYHCRCIDPWFSRAAQRSCPLCKQSVASTHDGSTDGSVGGEEPPLPGHRPPIWAIQARLRSRRLELLARTVPCRRCSSTTSLGVAENVAQSEATSELS.

Residues Met-1–Ala-28 form the signal peptide. The Lumenal portion of the chain corresponds to Gln-29 to Pro-150. N-linked (GlcNAc...) asparagine glycosylation is present at Asn-31. The helical transmembrane segment at Val-151–Val-171 threads the bilayer. The Cytoplasmic portion of the chain corresponds to Leu-172–Ser-327. An RING-type; atypical zinc finger spans residues Cys-209–Lys-252. Over residues Ala-256–Gly-265 the composition is skewed to polar residues. The disordered stretch occupies residues Ala-256–Pro-279.

As to quaternary structure, interacts with CANX. In terms of tissue distribution, expressed exclusively in spermatids (at protein level).

The protein localises to the endoplasmic reticulum membrane. It catalyses the reaction S-ubiquitinyl-[E2 ubiquitin-conjugating enzyme]-L-cysteine + [acceptor protein]-L-lysine = [E2 ubiquitin-conjugating enzyme]-L-cysteine + N(6)-ubiquitinyl-[acceptor protein]-L-lysine.. The protein operates within protein modification; protein ubiquitination. Functionally, E3 ubiquitin-protein ligase that acts as a negative regulator of NOD2 signaling by mediating ubiquitination and degradation of RIPK2. Also catalyzes ubiquitination and proteasomal degradation of CANX within the endoplasmic reticulum. Could have a role in spermatogenesis. The polypeptide is E3 ubiquitin-protein ligase ZNRF4 (Mus musculus (Mouse)).